Consider the following 557-residue polypeptide: MSLIKKKNKDIRIIPLGGVGEIAKNMYIVEVDDEMFMLDAGLMFPEDEMLGIDIVIPDISYVLENKDKLKGIFLTHGHEHAIGAVSYVLEQLDAPVYGSKLTIALIKENMKARNIDKKVRYYTVNNDSIMRFKNVNISFFNTTHSIPDSLGVCIHTSYGAIVYTGEFKFDQSLHGHYAPDIKRMAEIGEEGVFVLISDSTEAEKPGYNTPENVIEHHMYDAFAKVRGRLIVSCYASNFIRIQQVLNIASKLNRKVSFLGRSLESSFNIARKMGYFDIPKDLLIPITEVDNYPKNEVIIIATGMQGEPVEALSQMAQHKHKIMNIEEGDSVFLAITASANMEVIIANTLNELVRAGAHIIPNNKKIHASSHGCMEELKMMINIMKPEYFIPVQGEFKMQIAHAKLAAEAGVAPEKIFLVEKGDVINYNGKDMILNEKVNSGNILIDGIGIGDVGNIVLRDRHLLAEDGIFIAVVTLDPKNRRIAAGPEIQSRGFVYVRESEDLLREAEEKVREIVEAGLQEKRIEWSEIKQNMRDQISKLLFESTKRRPMIIPVISEI.

Zn(2+)-binding residues include His76, His78, His144, and Glu166. 366 to 370 (HASSH) serves as a coordination point for substrate.

The protein belongs to the metallo-beta-lactamase superfamily. RNA-metabolizing metallo-beta-lactamase-like family. Bacterial RNase J subfamily. As to quaternary structure, homodimer. Component of a possible RNA degradosome complex composed of cshA, eno, pfkA, pnp, rnjA, rnjB, rnpA and rny. Interacts specifically with RNase J1. The cofactor is Zn(2+).

It is found in the cytoplasm. Its function is as follows. An RNase that has 5'-3' exonuclease and endonuclease activity, with the exonuclease activity probably being most important in vivo. Involved in maturation of 16S rRNA, rnpB (the RNA component of RNase P) maturation and degradation, and mRNA maturation and/or decay. This subunit probably plays a structural rather than enzymatic role as mutation of its putative active site gives no phenotype, and its deletion is partially complemented by inactive RNase J1. The protein is Ribonuclease J 2 of Staphylococcus aureus (strain NCTC 8325 / PS 47).